The primary structure comprises 88 residues: MTRMVQCVRLGREAEGLPRPPYPGELGKRIYENVSKEAWQEWLRHQTMLINEYRLTPVEPRARQFLEKEMENFFFGDGSSAPPDYQPE.

The protein belongs to the Fe(2+)-trafficking protein family.

Functionally, could be a mediator in iron transactions between iron acquisition and iron-requiring processes, such as synthesis and/or repair of Fe-S clusters in biosynthetic enzymes. The chain is Probable Fe(2+)-trafficking protein from Alkalilimnicola ehrlichii (strain ATCC BAA-1101 / DSM 17681 / MLHE-1).